The chain runs to 295 residues: Glutamyl-Q tRNA(Asp) synthetase (295 aa).

L-glutamate is bound by residues 9-13 (RFAPT) and glutamate 45. A 'HIGH' region motif is present at residues 12 to 22 (PTPSGFLHFGS). Zn(2+)-binding residues include cysteine 101, cysteine 103, tyrosine 115, and cysteine 119. The L-glutamate site is built by tyrosine 172 and arginine 190. Residues 228 to 232 (KLGKS) carry the 'KMSKS' region motif. Lysine 231 is a binding site for ATP.

The protein belongs to the class-I aminoacyl-tRNA synthetase family. GluQ subfamily. Zn(2+) serves as cofactor.

Catalyzes the tRNA-independent activation of glutamate in presence of ATP and the subsequent transfer of glutamate onto a tRNA(Asp). Glutamate is transferred on the 2-amino-5-(4,5-dihydroxy-2-cyclopenten-1-yl) moiety of the queuosine in the wobble position of the QUC anticodon. This is Glutamyl-Q tRNA(Asp) synthetase from Pseudomonas putida (strain W619).